We begin with the raw amino-acid sequence, 1184 residues long: MEGKATELLAVLKNNNLAIDVKVSHLLSIKSDIKQKNVPDNAVHLIFESLRLAITSHHAALYAAGFSTFGHFLKRLFIQDQAHIVSAYARHFCPVLLERLGDHKERVRAQAAQIFTDLWPAASADVEHYVLEVALTGKNPKAKETSLIWLSNMSRNHGLLFRSYVPSVVSCLEDADSFVRHTAKSTVVELFQGAPARAKADLTKEMTAQNVRQSIVNAVYANIGLEDHSSTARPRSRVEPRYTPCTDSHPLRSASRAEVVHQQPAAVVSSAPLRPSKEATPMVEPEPIKSRPGSSKSDKGRTIAAAPEAEKAPHMETARPSSQDGEAPQPLHAETSKQVEDLFRVLSPAFEGRESEDNWRHREKYITSLRRLTYGNAPHDFPQPFFTGIKTNLDGIFKAVNSLRTTLSTNGCLLIQDLAKIGGSRIDPMVEVIMQNLIKLCGGMKKISAQNGNVSVNDVLANVTYTPRLLQHVTSACQDKNAQLRLFAAGWLKTLLNKQSHHKSSLEHGGGLALLEKSLKRGLTDANPGIREAMRGAFWTFHQMWPARGNNILSDLDNKTRHLLEKDPANPNRDQSSYLSSDTLTVPSRSALKEAIAAHKKARLAPAKTLPPRPESAQSSFSETKVSDPPAKSTGRTARAPLSSLSSAPMRPGAKPRRPELARPATADPYSSRKTAATDAVHIDSSPRPRRVANLGQAPSSTKSKPKKLDIPMTMAVDPVAPSASNENETQVATQVASKVRKRSSLSEQFAAIKRDDRDINALSELSINKTEHPHEIAVGESSNNEAGRHDDHAPCEISFDKLDRHDENKLSESPTPGPDHHDENALGELSINVPDRRDETALGELSINKPQRRDENALGELSINKLDRRDENTPSKSPPSEQDRRVEKTIDSAEHTSQAQRRVEESEPYFARFKIRSRLSNKRRNISPHSEHLENAKEMVRVAGQRIRSRSFDLFAYRKLQDLIHYHGEKLFTRPVFDDLLDGLLVELRKEPSPDRKHNGDYADVKTQVVGTLRLLEKSCPNLFVIDYDAIDAIFHARRYFETNSWIVQELQQTALEWFRNCEPSKLEGMLDTLVQYVQRETRDEPGYRSILMALSLLTDLIGDANKKGAWFSNEILEQVGTIAARDILAEDTDIRKKSIELCVQLYVMSTNLYQDKGVSFWRLVKAPEGGTRQLIMYYIARQ.

HEAT repeat units lie at residues 92-130 (FCPV…EHYV) and 162-194 (RSYV…FQGA). 2 stretches are compositionally biased toward basic and acidic residues: residues 229 to 240 (SSTARPRSRVEP) and 308 to 317 (EAEKAPHMET). The disordered stretch occupies residues 229 to 336 (SSTARPRSRV…APQPLHAETS (108 aa)). One copy of the HEAT 3 repeat lies at 463-499 (VTYTPRLLQHVTSACQDKNAQLRLFAAGWLKTLLNKQ). Disordered regions lie at residues 564–584 (LEKD…SDTL) and 602–906 (ARLA…RVEE). The span at 572–584 (NRDQSSYLSSDTL) shows a compositional bias: polar residues. The span at 640–649 (APLSSLSSAP) shows a compositional bias: low complexity. The segment covering 723-737 (SASNENETQVATQVA) has biased composition (polar residues). Composition is skewed to basic and acidic residues over residues 787-811 (AGRH…ENKL) and 882-895 (EQDR…DSAE).

This sequence belongs to the CLASP family. Interacts with microtubules.

It localises to the cytoplasm. The protein resides in the cytoskeleton. Its subcellular location is the nucleus. It is found in the spindle. Functionally, microtubule binding protein that promotes the stabilization of dynamic microtubules. Required for mitotic spindle formation. The polypeptide is Protein stu1 (stu1) (Aspergillus oryzae (strain ATCC 42149 / RIB 40) (Yellow koji mold)).